We begin with the raw amino-acid sequence, 165 residues long: MAPKKAKKKVEGGSNVFSMFEQTQIQEFKEAFTIMDQNRDGFIDKADLRDTFAALGRLNVKNEELEDMVKEAPGPINFTVFLTMFGEKLKGTDPEETILNAFKIFDPEGKGHIKADYIKEMLMTQEGRFSQEEINQMFAAFPPDVSGNLDYKNLCYVITHGEEKD.

A N,N,N-trimethylalanine modification is found at A2. EF-hand domains lie at 23–58 (TQIQ…LGRL), 93–128 (DPEE…QEGR), and 129–164 (FSQE…GEEK). D36, N38, D40, and D47 together coordinate Ca(2+).

As to quaternary structure, myosin is a hexamer of 2 heavy chains and 4 light chains. In terms of processing, the N-terminus is blocked. N,N,N-trimethylalanine, found in other myosin light chains would not have been detected in the N-terminal tryptic peptide in PubMed:7319048 because it would remain trimethylated and ninhydrin negative after hydrolysis.

This is Myosin regulatory light chain 2B, cardiac muscle isoform from Gallus gallus (Chicken).